Here is a 197-residue protein sequence, read N- to C-terminus: dITP/XTP pyrophosphatase (197 aa).

8–13 contacts substrate; that stretch reads TGNPGK. Glutamate 40 and aspartate 69 together coordinate Mg(2+). Residue aspartate 69 is the Proton acceptor of the active site. Substrate-binding positions include serine 70, 154-157, lysine 177, and 182-183; these read FGYD and HR.

Belongs to the HAM1 NTPase family. Homodimer. Mg(2+) is required as a cofactor.

It carries out the reaction XTP + H2O = XMP + diphosphate + H(+). The enzyme catalyses dITP + H2O = dIMP + diphosphate + H(+). It catalyses the reaction ITP + H2O = IMP + diphosphate + H(+). In terms of biological role, pyrophosphatase that catalyzes the hydrolysis of nucleoside triphosphates to their monophosphate derivatives, with a high preference for the non-canonical purine nucleotides XTP (xanthosine triphosphate), dITP (deoxyinosine triphosphate) and ITP. Seems to function as a house-cleaning enzyme that removes non-canonical purine nucleotides from the nucleotide pool, thus preventing their incorporation into DNA/RNA and avoiding chromosomal lesions. The sequence is that of dITP/XTP pyrophosphatase from Pectobacterium atrosepticum (strain SCRI 1043 / ATCC BAA-672) (Erwinia carotovora subsp. atroseptica).